We begin with the raw amino-acid sequence, 277 residues long: Putative hydro-lyase BP1875 (277 aa).

The protein belongs to the D-glutamate cyclase family.

The polypeptide is Putative hydro-lyase BP1875 (Bordetella pertussis (strain Tohama I / ATCC BAA-589 / NCTC 13251)).